The chain runs to 363 residues: Sulfate/thiosulfate import ATP-binding protein CysA (363 aa).

An ABC transporter domain is found at 3 to 237 (IEINNISKYF…PATRFVLEFL (235 aa)). 35–42 (GPSGSGKT) contacts ATP.

This sequence belongs to the ABC transporter superfamily. Sulfate/tungstate importer (TC 3.A.1.6) family. In terms of assembly, the complex is composed of two ATP-binding proteins (CysA), two transmembrane proteins (CysT and CysW) and a solute-binding protein (CysP).

The protein resides in the cell inner membrane. It catalyses the reaction sulfate(out) + ATP + H2O = sulfate(in) + ADP + phosphate + H(+). The catalysed reaction is thiosulfate(out) + ATP + H2O = thiosulfate(in) + ADP + phosphate + H(+). In terms of biological role, part of the ABC transporter complex CysAWTP involved in sulfate/thiosulfate import. Responsible for energy coupling to the transport system. This Yersinia pestis protein is Sulfate/thiosulfate import ATP-binding protein CysA.